The primary structure comprises 680 residues: DNA-directed RNA polymerase subunit beta' (680 aa).

Positions 69, 71, 87, and 90 each coordinate Zn(2+). Positions 489, 491, and 493 each coordinate Mg(2+).

It belongs to the RNA polymerase beta' chain family. RpoC1 subfamily. In terms of assembly, in plastids the minimal PEP RNA polymerase catalytic core is composed of four subunits: alpha, beta, beta', and beta''. When a (nuclear-encoded) sigma factor is associated with the core the holoenzyme is formed, which can initiate transcription. Mg(2+) serves as cofactor. It depends on Zn(2+) as a cofactor.

The protein resides in the plastid. It is found in the chloroplast. It carries out the reaction RNA(n) + a ribonucleoside 5'-triphosphate = RNA(n+1) + diphosphate. DNA-dependent RNA polymerase catalyzes the transcription of DNA into RNA using the four ribonucleoside triphosphates as substrates. In Manihot esculenta (Cassava), this protein is DNA-directed RNA polymerase subunit beta'.